Reading from the N-terminus, the 311-residue chain is Protein lifeguard 3 (311 aa).

Disordered regions lie at residues 1 to 37 (MSNPSAPPPYEDRNPLYPGPPPPGGYGQPSVLPGGYP) and 50 to 72 (PAGYPQPMPPTHPMPMNYGPGHG). Positions 53 to 62 (YPQPMPPTHP) are enriched in pro residues. S81 and S83 each carry phosphoserine. Helical transmembrane passes span 110 to 130 (LLITVAIIAIFTFVEPVSAFV), 134 to 154 (VAVYYVSYAVFVVTYLILACC), 165 to 185 (IILLTLFTFAMGFMTGTISSM), 190 to 210 (AVIIAMIITAVVSISVTIFCF), 221 to 241 (GLFCVLGIVLLVTGIVTSIVL), 246 to 266 (VYWLHMLYAALGAICFTLFLA), and 286 to 306 (ITGALQIYTDIIYIFTFVLQL).

Belongs to the BI1 family. LFG subfamily.

The protein localises to the membrane. Its subcellular location is the lysosome membrane. It localises to the endosome membrane. Functionally, negatively regulates aortic matrix metalloproteinase-9 (MMP9) production and may play a protective role in vascular remodeling. The chain is Protein lifeguard 3 (TMBIM1) from Homo sapiens (Human).